The sequence spans 427 residues: Zinc finger protein 134 (427 aa).

Lys-20 participates in a covalent cross-link: Glycyl lysine isopeptide (Lys-Gly) (interchain with G-Cter in SUMO2). The C2H2-type 1 zinc finger occupies 50–72 (LPCDICGPILKDILHLDEHQGTH). The C2H2-type 2; degenerate zinc-finger motif lies at 78–100 (HTCGACGRQFWFSANLHQYQKCY). Glycyl lysine isopeptide (Lys-Gly) (interchain with G-Cter in SUMO2) cross-links involve residues Lys-135 and Lys-139. C2H2-type zinc fingers lie at residues 176 to 198 (YKCSECGKAFSRKDTLVQHQRIH), 204 to 226 (YECSECGKAFSRKATLVQHQRIH), 232 to 254 (YECSECGKTFSRKDNLTQHKRIH), 260 to 282 (YKCNECGKYFSHHSNLIVHQRVH), 288 to 310 (YKCSDCGKVFRHKSTLVQHESIH), 316 to 338 (YDCSDCGKSFGHKYTLIKHQRIH), 344 to 366 (FECIECGKFFSRSSDYIAHQRVH), 372 to 394 (FVCSKCGKDFIRTSHLVRHQRVH), and 400 to 422 (YECSECGKAYSLSSHLNRHQKVH).

It belongs to the krueppel C2H2-type zinc-finger protein family.

It localises to the nucleus. Its function is as follows. May be involved in transcriptional regulation. This chain is Zinc finger protein 134 (ZNF134), found in Homo sapiens (Human).